The chain runs to 242 residues: Cytochrome c oxidase subunit 2 (242 aa).

Over 1 to 30 the chain is Mitochondrial intermembrane; it reads MSFYGSRYFGDIVHGELGKDLFRYHGFVMM. A helical membrane pass occupies residues 31–47; the sequence is VAVAVLVFVMYMGCVIL. Topologically, residues 48–66 are mitochondrial matrix; the sequence is FTKFSYRHFLNRQRLEFWW. The helical transmembrane segment at 67–83 threads the bilayer; it reads TIVPMLMLVGLWXPSMI. Residues 84-242 are Mitochondrial intermembrane-facing; that stretch reads NLYYMEEVKR…YFVMWLEALN (159 aa). Cu cation-binding residues include His176, Cys211, Glu213, Cys215, His219, and Met222. Glu213 is a Mg(2+) binding site.

This sequence belongs to the cytochrome c oxidase subunit 2 family. Component of the cytochrome c oxidase (complex IV, CIV), a multisubunit enzyme composed of a catalytic core of 3 subunits and several supernumerary subunits. The complex exists as a monomer or a dimer and forms supercomplexes (SCs) in the inner mitochondrial membrane with ubiquinol-cytochrome c oxidoreductase (cytochrome b-c1 complex, complex III, CIII). It depends on Cu cation as a cofactor.

It localises to the mitochondrion inner membrane. The enzyme catalyses 4 Fe(II)-[cytochrome c] + O2 + 8 H(+)(in) = 4 Fe(III)-[cytochrome c] + 2 H2O + 4 H(+)(out). In terms of biological role, component of the cytochrome c oxidase, the last enzyme in the mitochondrial electron transport chain which drives oxidative phosphorylation. The respiratory chain contains 3 multisubunit complexes succinate dehydrogenase (complex II, CII), ubiquinol-cytochrome c oxidoreductase (cytochrome b-c1 complex, complex III, CIII) and cytochrome c oxidase (complex IV, CIV), that cooperate to transfer electrons derived from NADH and succinate to molecular oxygen, creating an electrochemical gradient over the inner membrane that drives transmembrane transport and the ATP synthase. Cytochrome c oxidase is the component of the respiratory chain that catalyzes the reduction of oxygen to water. Electrons originating from reduced cytochrome c in the intermembrane space (IMS) are transferred via the dinuclear copper A center (CU(A)) of subunit 2 and heme A of subunit 1 to the active site in subunit 1, a binuclear center (BNC) formed by heme A3 and copper B (CU(B)). The BNC reduces molecular oxygen to 2 water molecules using 4 electrons from cytochrome c in the IMS and 4 protons from the mitochondrial matrix. The chain is Cytochrome c oxidase subunit 2 (COII) from Mytilus edulis (Blue mussel).